The primary structure comprises 248 residues: Protein maestro (248 aa).

Residues 1–21 form a disordered region; sequence MDQRQRRILGQPLSIPTSQPK. One copy of the HEAT repeat lies at 128 to 163; the sequence is SFFIDITLQTRTLLDDENDSLRYSAFVLFGQLAAFA.

As to expression, ubiquitous.

It localises to the nucleus. The protein localises to the nucleolus. This is Protein maestro (MRO) from Homo sapiens (Human).